Here is a 919-residue protein sequence, read N- to C-terminus: MFS-type transporter clz9 (919 aa).

Polar residues predominate over residues 1–11 (MAASTKPTTKL). Residues 1–33 (MAASTKPTTKLSTEEDDVSRRDSESSADFMKSN) are disordered. Residues 69-89 (VVASFAAAISPFSTSTYYPVV) traverse the membrane as a helical segment. Residue asparagine 104 is glycosylated (N-linked (GlcNAc...) asparagine). The next 3 helical transmembrane spans lie at 132–152 (PMFL…ALQN), 192–212 (LIYA…IGGL), and 222–242 (VFWF…IFFG). The N-linked (GlcNAc...) asparagine glycan is linked to asparagine 260. Transmembrane regions (helical) follow at residues 303–323 (FILS…TSVL), 333–353 (YDAV…LLAY), 393–413 (LGFV…YGWQ), and 418–438 (APLA…TGVM). Asparagine 461 is a glycosylation site (N-linked (GlcNAc...) asparagine). A helical membrane pass occupies residues 465–485 (LLLGAGAVAVVGPLNKSAGIG). Positions 641–809 (REWVTLIQGI…FTSANICSSF (169 aa)) constitute a DDE-1 domain. A disordered region spans residues 840–897 (EAPWEAKTPSNRKKKQIQKRGTLTKGEGEDTLAQKEADQQIEREQRQGGEQSGRSRQA). The segment covering 865 to 886 (GEGEDTLAQKEADQQIEREQRQ) has biased composition (basic and acidic residues). Residues 887-896 (GGEQSGRSRQ) show a composition bias toward low complexity. The N-linked (GlcNAc...) asparagine glycan is linked to asparagine 915.

Belongs to the major facilitator superfamily. CAR1 family.

The protein resides in the membrane. MFS-type transporter; part of the gene cluster that mediates the biosynthesis of squalestatin S1 (SQS1, also known as zaragozic acid A), a heavily oxidized fungal polyketide that offers potent cholesterol lowering activity by targeting squalene synthase (SS). This is MFS-type transporter clz9 from Cochliobolus lunatus (Filamentous fungus).